The primary structure comprises 47 residues: MSNPKRSPNHFAPNHIGTQPRAAGGNKGKQMQDQSGQHAQVIQTKGE.

The disordered stretch occupies residues 1-47 (MSNPKRSPNHFAPNHIGTQPRAAGGNKGKQMQDQSGQHAQVIQTKGE). Residues 29-47 (KQMQDQSGQHAQVIQTKGE) are compositionally biased toward polar residues.

This sequence belongs to the SspN family.

It localises to the spore core. In Geobacillus thermodenitrificans (strain NG80-2), this protein is Small, acid-soluble spore protein N.